The primary structure comprises 90 residues: Antitoxin epsilon 2 (90 aa).

It belongs to the epsilon antitoxin family. In terms of assembly, in the presence of the zeta toxin, forms an inactive PezA(2)PezT(2) heterotetramer.

Its function is as follows. Antitoxin component of a type II toxin-antitoxin (TA) system. Neutralizes the toxic effect of zeta toxin. Part of a postsegregational killing (PSK) system involved in the killing of plasmid-free cells. Continuous synthesis of the epsilon antitoxin is required to counteract the zeta toxin. The polypeptide is Antitoxin epsilon 2 (Enterococcus faecalis (Streptococcus faecalis)).